Here is a 210-residue protein sequence, read N- to C-terminus: Cell division protein SepF (210 aa).

The tract at residues 13 to 78 (GFGEPTGYDY…VTSTAMNPPM (66 aa)) is disordered. Acidic residues predominate over residues 22–31 (YDYDEMEGDD). The span at 47–60 (RSEEPHPRPSEPEM) shows a compositional bias: basic and acidic residues. The segment covering 64 to 78 (VNTSAVTSTAMNPPM) has biased composition (polar residues).

It belongs to the SepF family. As to quaternary structure, homodimer. Interacts with FtsZ.

It localises to the cytoplasm. In terms of biological role, cell division protein that is part of the divisome complex and is recruited early to the Z-ring. Probably stimulates Z-ring formation, perhaps through the cross-linking of FtsZ protofilaments. Its function overlaps with FtsA. This chain is Cell division protein SepF, found in Cyanothece sp. (strain PCC 7425 / ATCC 29141).